We begin with the raw amino-acid sequence, 1594 residues long: NAD-specific glutamate dehydrogenase (1594 aa).

Lys-816 is a catalytic residue.

Belongs to the Glu/Leu/Phe/Val dehydrogenases family. In terms of assembly, interacts with (unphosphorylated) GarA.

The enzyme catalyses L-glutamate + NAD(+) + H2O = 2-oxoglutarate + NH4(+) + NADH + H(+). With respect to regulation, activity is inhibited by unphosphorylated GarA. Stimulated by manganese and magnesium. Its function is as follows. Catalyzes the reversible conversion of L-glutamate to 2-oxoglutarate. Highly specific for NAD. This is NAD-specific glutamate dehydrogenase (gdh) from Mycolicibacterium smegmatis (strain ATCC 700084 / mc(2)155) (Mycobacterium smegmatis).